The primary structure comprises 123 residues: Large ribosomal subunit protein bL12 (123 aa).

It belongs to the bacterial ribosomal protein bL12 family. As to quaternary structure, homodimer. Part of the ribosomal stalk of the 50S ribosomal subunit. Forms a multimeric L10(L12)X complex, where L10 forms an elongated spine to which 2 to 4 L12 dimers bind in a sequential fashion. Binds GTP-bound translation factors.

In terms of biological role, forms part of the ribosomal stalk which helps the ribosome interact with GTP-bound translation factors. Is thus essential for accurate translation. This chain is Large ribosomal subunit protein bL12, found in Acinetobacter baumannii (strain AB307-0294).